We begin with the raw amino-acid sequence, 401 residues long: Protein KlcB (401 aa).

The tract at residues 253 to 311 (AARSNAKGKAGGRERDPASAETAMRCSTAKADDCKAEAGPVSPEATMPGAGEASCSTAR) is disordered.

The sequence is that of Protein KlcB (klcB) from Escherichia coli.